The primary structure comprises 74 residues: Cytochrome c oxidase assembly factor 5 (74 aa).

Positions 27–65 constitute a CHCH domain; that stretch reads QSDCVLKEGKSPRQCLKEGNCKALKYSFFECKRSMLDAR. Residues 30 to 41 carry the Cx10C motif motif; the sequence is CVLKEGKSPRQC. Intrachain disulfides connect Cys-30-Cys-57 and Cys-41-Cys-47. Phosphoserine is present on Ser-37. The Cx9C motif motif lies at 47-57; sequence CKALKYSFFEC.

The protein belongs to the PET191 family.

In terms of biological role, involved in an early step of the mitochondrial complex IV assembly process. The protein is Cytochrome c oxidase assembly factor 5 (COA5) of Bos taurus (Bovine).